We begin with the raw amino-acid sequence, 687 residues long: Chloride channel protein ClC-Kb (687 aa).

Topologically, residues Met-1–Trp-50 are cytoplasmic. Transmembrane regions (helical) follow at residues Tyr-51–Tyr-82 and Leu-91–Ser-111. The segment at residues Pro-116 to Lys-127 is an intramembrane region (helical). Ser-121 serves as a coordination point for chloride. 2 helical membrane-spanning segments follow: residues Ile-141–Thr-160 and Leu-161–Leu-180. Asn-193 is a glycosylation site (N-linked (GlcNAc...) asparagine). An intramembrane region (helical) is located at residues Ala-203–Ile-224. The chain crosses the membrane as a helical span at residues Tyr-236–Val-255. 4 residues coordinate Ca(2+): Glu-259, Glu-261, Asp-278, and Glu-281. 2 consecutive transmembrane segments (helical) span residues Ile-282–Ile-310 and Pro-325–Pro-342. An intramembrane region (helical) is located at residues Ala-349–Ser-360. Helical transmembrane passes span Gly-400–Pro-420 and Met-421–Phe-440. Residue Phe-426 participates in chloride binding. The segment at residues Gly-464 to Val-496 is an intramembrane region (helical). Residues Pro-500–Tyr-520 form a helical membrane-spanning segment. Over Asp-521–Lys-687 the chain is Cytoplasmic. CBS domains follow at residues Met-551–Ser-609 and Cys-626–Pro-684.

It belongs to the chloride channel (TC 2.A.49) family. CLCNKB subfamily. In terms of assembly, homodimer. Interacts with BSND. Post-translationally, N-glycosylated.

Its subcellular location is the basolateral cell membrane. It catalyses the reaction chloride(in) = chloride(out). The enzyme catalyses iodide(out) = iodide(in). It carries out the reaction nitrate(in) = nitrate(out). The catalysed reaction is bromide(in) = bromide(out). With respect to regulation, activated by extracellular Ca(2+) and inhibited by extracellular acidic pH. Its function is as follows. Anion-selective channel permeable to small monovalent anions with ion selectivity for chloride &gt; bromide &gt; nitrate &gt; iodide. Forms a homodimeric channel where each subunit has its own ion conduction pathway. May conduct double-barreled currents controlled by two types of gates, two fast gates that control each subunit independently and a slow common gate that opens and shuts off both subunits simultaneously. Assembles with the regulatory subunit BSND/Barttin for sorting at the basolateral plasma membrane domain and functional switch to the ion conducting state. CLCNKB:BSND channels display mostly a linear current-voltage relationship controlled by common gate. Mediates chloride conductance along nephron segments, namely the thick ascending limb of Henle's loop, convoluted tubule and the collecting duct, contributing to the maintenance of systemic acid-base and electrolyte homeostasis. Conducts chloride currents in the stria vascularis of the inner ear to establish the endocochlear potential necessary for normal hearing. This Homo sapiens (Human) protein is Chloride channel protein ClC-Kb.